Consider the following 139-residue polypeptide: D-ribose pyranase (139 aa).

Residue histidine 20 is the Proton donor of the active site. Substrate is bound by residues aspartate 28, histidine 106, and 128–130 (YAN).

This sequence belongs to the RbsD / FucU family. RbsD subfamily. As to quaternary structure, homodecamer.

The protein resides in the cytoplasm. It carries out the reaction beta-D-ribopyranose = beta-D-ribofuranose. It functions in the pathway carbohydrate metabolism; D-ribose degradation; D-ribose 5-phosphate from beta-D-ribopyranose: step 1/2. Catalyzes the interconversion of beta-pyran and beta-furan forms of D-ribose. The polypeptide is D-ribose pyranase (Aliivibrio fischeri (strain ATCC 700601 / ES114) (Vibrio fischeri)).